The chain runs to 288 residues: Centromere protein P (288 aa).

The stretch at Met1 to Ser71 forms a coiled coil. Position 38 is a phosphoserine (Ser38).

It belongs to the CENP-P/CTF19 family. In terms of assembly, component of the CENPA-CAD complex, composed of CENPI, CENPK, CENPL, CENPO, CENPP, CENPQ, CENPR and CENPS. The CENPA-CAD complex interacts with the CENPA-NAC complex, at least composed of CENPA, CENPC, CENPH, CENPM, CENPN, CENPT and CENPU.

The protein localises to the nucleus. The protein resides in the chromosome. It is found in the centromere. Its function is as follows. Component of the CENPA-CAD (nucleosome distal) complex, a complex recruited to centromeres which is involved in assembly of kinetochore proteins, mitotic progression and chromosome segregation. May be involved in incorporation of newly synthesized CENPA into centromeres via its interaction with the CENPA-NAC complex. This is Centromere protein P (CENPP) from Homo sapiens (Human).